Here is a 334-residue protein sequence, read N- to C-terminus: D-fructose 1,6-bisphosphatase class 2/sedoheptulose 1,7-bisphosphatase (334 aa).

Residues Asp33, Glu57, Asp85, and Glu88 each coordinate Mn(2+). Substrate-binding positions include 88 to 90 (EGT), Tyr119, 164 to 166 (RAR), and 186 to 188 (DGD). Position 213 (Glu213) interacts with Mn(2+).

Belongs to the FBPase class 2 family. In terms of assembly, homotetramer. Mn(2+) serves as cofactor.

The enzyme catalyses beta-D-fructose 1,6-bisphosphate + H2O = beta-D-fructose 6-phosphate + phosphate. The catalysed reaction is D-sedoheptulose 1,7-bisphosphate + H2O = D-sedoheptulose 7-phosphate + phosphate. It functions in the pathway carbohydrate biosynthesis; Calvin cycle. In terms of biological role, catalyzes the hydrolysis of fructose 1,6-bisphosphate (Fru 1,6-P2) and sedoheptulose 1,7-bisphosphate (Sed 1,7-P2) to fructose 6-phosphate and sedoheptulose 7-phosphate, respectively. This Synechococcus sp. (strain CC9311) protein is D-fructose 1,6-bisphosphatase class 2/sedoheptulose 1,7-bisphosphatase.